Consider the following 763-residue polypeptide: Phosphoglycerol transferase I (763 aa).

4 helical membrane passes run 1 to 21, 26 to 46, 77 to 97, and 108 to 128; these read MSEL…AWKA, WWFA…ITLF, ILPG…LGWI, and FGYS…SPAF.

Belongs to the OpgB family.

The protein localises to the cell inner membrane. The enzyme catalyses a phosphatidylglycerol + a membrane-derived-oligosaccharide D-glucose = a 1,2-diacyl-sn-glycerol + a membrane-derived-oligosaccharide 6-(glycerophospho)-D-glucose.. It functions in the pathway glycan metabolism; osmoregulated periplasmic glucan (OPG) biosynthesis. Its function is as follows. Transfers a phosphoglycerol residue from phosphatidylglycerol to the membrane-bound nascent glucan backbones. This chain is Phosphoglycerol transferase I, found in Escherichia coli (strain 55989 / EAEC).